Here is a 752-residue protein sequence, read N- to C-terminus: Double zinc ribbon and ankyrin repeat-containing protein 1 (752 aa).

2 DZANK-type zinc fingers span residues 210–270 (CPKC…VVCE) and 338–386 (CSKC…GGCG). The span at 448–469 (KKRSQQREAELSRQEQMRDRKP) shows a compositional bias: basic and acidic residues. 2 disordered regions span residues 448–471 (KKRS…KPLL) and 536–614 (PPEE…VGPE). Residues 536 to 554 (PPEESRSSSAGQRSRSVTS) show a composition bias toward low complexity. Over residues 555–580 (ESQNLSSVTEGRNSASPENNINTTGS) the composition is skewed to polar residues. Positions 600–614 (PESKDSLLLKEVGPE) are enriched in basic and acidic residues. ANK repeat units lie at residues 638–667 (DGRP…DVNQ), 672–703 (LKNT…SIRK), and 707–737 (RGQT…GLLL).

The protein localises to the cytoplasm. It is found in the cytoskeleton. It localises to the microtubule organizing center. Its subcellular location is the centrosome. The protein resides in the cilium basal body. Required for the intracellular transport of organelles and vesicles, and is essential for the photoreceptor's outer segments formation, maintenance and function. The protein is Double zinc ribbon and ankyrin repeat-containing protein 1 (dzank1) of Danio rerio (Zebrafish).